We begin with the raw amino-acid sequence, 425 residues long: RNA-binding protein L (425 aa).

The span at Met1–Gln20 shows a compositional bias: pro residues. Positions Met1–Ala82 are disordered. A compositionally biased stretch (low complexity) spans Gly21–Ala31. Residues Ile32–Met80 show a composition bias toward pro residues. 3 consecutive RRM domains span residues Lys90 to Ala170, Tyr180 to Asn259, and Thr284 to Ser356.

This sequence belongs to the polyadenylate-binding RBP45 family. As to quaternary structure, interacts with RBP-P. Interacts with RAB5A.

It localises to the nucleus. It is found in the cytoplasm. Its function is as follows. RNA-binding protein that binds to a cis-localization element or zipcode, within the 5'-CDS of prolamine RNA. Binds strongly to glutelin and prolamin mRNAs, particularly to 3'-UTR and zipcode RNA. Recognizes and binds to glutelin zipcode RNA, which is required for proper mRNA localization to cisternal endoplasmic reticulum. Recognizes and binds to prolamin zipcode RNA, which is required for proper mRNA localization to the protein body endoplasmic reticulum that delimits the prolamine intracisternal inclusion granules. Required for the correct localization of glutelin and prolamine mRNA in endosperm cells during grain development. RBP-L and RBP-P form a quaternary complex with the membrane trafficking factors NSF and RAB5A. This quaternay complex carries glutelin mRNAs for active transport on endosomes to the cortical endoplasmic reticulum membrane, and enables endosome-mediated glutelin mRNA transport in endosperm cells. The polypeptide is RNA-binding protein L (Oryza sativa subsp. japonica (Rice)).